We begin with the raw amino-acid sequence, 707 residues long: Complement C1r-A subcomponent (707 aa).

A signal peptide spans 1 to 16 (MWLFALLVTLFYGVEG). The 124-residue stretch at 17 to 140 (SIYLPQKLYG…KGFLAYYQAV (124 aa)) folds into the CUB 1 domain. Glutamate 65, aspartate 73, and aspartate 118 together coordinate Ca(2+). An intrachain disulfide couples cysteine 70 to cysteine 88. N-linked (GlcNAc...) asparagine glycosylation occurs at asparagine 124. Aspartate 141, leucine 142, and glutamate 144 together coordinate Ca(2+). The EGF-like; calcium-binding domain occupies 141–189 (DLDECASQPNSVEEGLQPRCQHLCHNYVGGYFCSCHPGYELQKDGQSCQ). Intrachain disulfides connect cysteine 145-cysteine 164, cysteine 160-cysteine 173, cysteine 175-cysteine 188, and cysteine 192-cysteine 219. Residues asparagine 166, tyrosine 167, and glycine 170 each coordinate Ca(2+). Position 166 is a (3R)-3-hydroxyasparagine (asparagine 166). A CUB 2 domain is found at 192-304 (CSSELYTEPS…RGWKLHYTTE (113 aa)). A Phosphoserine; by CK2 modification is found at serine 205. Residue asparagine 220 is glycosylated (N-linked (GlcNAc...) asparagine). Ca(2+) contacts are provided by aspartate 242, aspartate 252, aspartate 289, and aspartate 293. A disulfide bond links cysteine 249 and cysteine 267. 2 Sushi domains span residues 306–372 (IKCP…RCKI) and 373–448 (KNCG…RCLP). Cystine bridges form between cysteine 308/cysteine 357, cysteine 337/cysteine 370, cysteine 375/cysteine 428, cysteine 405/cysteine 446, and cysteine 450/cysteine 579. Residues 463–704 (IIRGQPARPG…YVDWIKKEMG (242 aa)) enclose the Peptidase S1 domain. Catalysis depends on charge relay system residues histidine 501 and aspartate 559. Asparagine 583 carries N-linked (GlcNAc...) asparagine glycosylation. Intrachain disulfides connect cysteine 622–cysteine 641 and cysteine 652–cysteine 682. Serine 656 acts as the Charge relay system in catalysis.

This sequence belongs to the peptidase S1 family. As to quaternary structure, core component of the complement C1 complex, a calcium-dependent complex composed of 1 molecule of the C1Q subcomplex, 2 molecules of C1R and 2 molecules of C1S. The C1Q subcomplex is composed 18 subunits: 3 chains of C1QA, C1QB, and C1QC trimerize to form 6 collagen-like triple helices connected to six globular ligand-recognition modules. Within the C1 complex, C1R is a dimer of identical chains, each of which is activated by cleavage into two chains, heavy and light, connected by disulfide bonds. In terms of processing, cleaved and activated by autocatalytic processing to generate Complement C1r subcomponent heavy and light chains that are connected by disulfide bonds. The iron and 2-oxoglutarate dependent 3-hydroxylation of aspartate and asparagine is (R) stereospecific within EGF domains.

Its subcellular location is the secreted. It is found in the cell surface. The enzyme catalyses Selective cleavage of Lys(or Arg)-|-Ile bond in complement subcomponent C1s to form the active form of C1s (EC 3.4.21.42).. Its activity is regulated as follows. Activated by the C1Q subcomplex of the C1 complex following C1Q binding to immunoglobulins (IgG or IgM) complexed with antigens to form antigen-antibody complexes on the surface of pathogens. Immunoglobulin-binding promotes autoactivation of C1R, which results in the cleavage of the Arg-Ile bond in the catalytic domain. Its function is as follows. Serine protease component of the complement C1 complex, a multiprotein complex that initiates the classical pathway of the complement system, a cascade of proteins that leads to phagocytosis and breakdown of pathogens and signaling that strengthens the adaptive immune system. C1R catalyzes the first enzymatic step in the classical complement pathway: it is activated by the C1Q subcomplex of the C1 complex, which associates with IgG or IgM immunoglobulins complexed with antigens to form antigen-antibody complexes on the surface of pathogens. Immunoglobulin-binding promotes the autocatalytic cleavage and activation of C1R. Activated C1R then cleaves and activates C1S, the second protease of the classical complement pathway. It is unclear if C1R activates C1S within single, strained C1 complexes or between neighboring C1 complexes on surfaces. The sequence is that of Complement C1r-A subcomponent (C1ra) from Mus musculus (Mouse).